A 440-amino-acid polypeptide reads, in one-letter code: Tubulin beta-3 chain (440 aa).

GTP-binding residues include Gln2, Glu60, Ser129, Gly133, Thr134, Gly135, Asn195, and Asn217. A Mg(2+)-binding site is contributed by Glu60. Residues 411-440 (SEYQQYQDATADEEGEYEDEEEEEPEHGYE) are disordered. The segment covering 420–440 (TADEEGEYEDEEEEEPEHGYE) has biased composition (acidic residues).

The protein belongs to the tubulin family. As to quaternary structure, dimer of alpha and beta chains. A typical microtubule is a hollow water-filled tube with an outer diameter of 25 nm and an inner diameter of 15 nM. Alpha-beta heterodimers associate head-to-tail to form protofilaments running lengthwise along the microtubule wall with the beta-tubulin subunit facing the microtubule plus end conferring a structural polarity. Microtubules usually have 13 protofilaments but different protofilament numbers can be found in some organisms and specialized cells. It depends on Mg(2+) as a cofactor.

It localises to the cytoplasm. The protein localises to the cytoskeleton. Tubulin is the major constituent of microtubules, a cylinder consisting of laterally associated linear protofilaments composed of alpha- and beta-tubulin heterodimers. Microtubules grow by the addition of GTP-tubulin dimers to the microtubule end, where a stabilizing cap forms. Below the cap, tubulin dimers are in GDP-bound state, owing to GTPase activity of alpha-tubulin. In Pisum sativum (Garden pea), this protein is Tubulin beta-3 chain (TUBB3).